We begin with the raw amino-acid sequence, 461 residues long: Protein IQ-DOMAIN 2 (461 aa).

The tract at residues 1-55 (MGKKAKWFSSVKKAFSPDSKKSKQKLAEGQNGVISNPPVVDNVRQSSSSPPPALA) is disordered. The IQ domain occupies 114–142 (EEAAAILIQTIFRGYLARRALRAMRGLVR). The segment at 141-158 (VRLKLLMEGSVVKRQAAN) is calmodulin-binding. Residues 278-461 (PLESSEKEQS…GVTVTNGAGS (184 aa)) are disordered. The span at 310–345 (LTRNGSTQPNTPSSARGTPRNKNSFFSPPTPSRLNQ) shows a compositional bias: polar residues. The short motif at 425–432 (KKRLSYPT) is the Nuclear localization signal element.

Belongs to the IQD family. In terms of assembly, binds to multiple calmodulin (CaM) in the presence of Ca(2+) and CaM-like proteins.

The protein localises to the nucleus. It is found in the cytoplasm. Its subcellular location is the cytoskeleton. May be involved in cooperative interactions with calmodulins or calmodulin-like proteins. Recruits calmodulin proteins to microtubules, thus being a potential scaffold in cellular signaling and trafficking. May associate with nucleic acids and regulate gene expression at the transcriptional or post-transcriptional level. In Arabidopsis thaliana (Mouse-ear cress), this protein is Protein IQ-DOMAIN 2.